The primary structure comprises 259 residues: MSDLYAHRESDEYLLKPEHFAEKKNRPKRWDCLRPIIYTSLAFVGFIEILFFGIFFAQATRKTPERLLGELNGLVGNFPARRVIFRSDPLAASDHKTEESRNATMNNWLSYMPRGNGFIAVNQTERYTLPPPIKQLGQDTYSIAVFHQLHCLYAIMSVYDDLAAAKSAADLNAHHSRDDTHSNEHPHEQVHVHSHDHVDHCFQYLRQSLLCCGDTALEGQDPRTDNPGTDGTGAVHICKDFDGILAWADSRRLVDAKHN.

The chain crosses the membrane as a helical span at residues 36-56; the sequence is IIYTSLAFVGFIEILFFGIFF. Residues asparagine 102 and asparagine 122 are each glycosylated (N-linked (GlcNAc...) asparagine). 2 consecutive short sequence motifs (HXXHC) follow at residues 147 to 151 and 197 to 201; these read HQLHC and HVDHC.

This sequence belongs to the ustYa family.

The protein localises to the membrane. It participates in mycotoxin biosynthesis. Oxidase; part of the gene cluster that mediates the biosynthesis of the secondary metabolite ustiloxin B, an antimitotic tetrapeptide. First, ustA is processed by the subtilisin-like endoprotease Kex2 that is outside the ustiloxin B gene cluster, at the C-terminal side of Arg-Lys, after transfer to Golgi apparatus through the endoplasmic reticulum (ER). Cleavage by KEX2 generates 16 peptides YAIG-I to YAIG-XVI. To process the precursor peptide further, at least two peptidases are necessary to cleave the N-terminal and C-terminal sides of the Tyr-Ala-Ile-Gly core peptide which serves as backbone for the synthesis of ustiloxin B, through cyclization and modification of the tyrosine with a non-protein coding amino acid, norvaline. One of the two peptidases must be the serine peptidase ustP; and the other pepdidase is probably ustH. Macrocyclization of the core peptide derived from ustA requires the tyrosinase ustQ, as well as the homologous oxidases ustYa and ustYb, and leads to the production of the first cyclization product N-desmethylustiloxin F. For the formation of N-desmethylustiloxin F, three oxidation steps are required, hydroxylation at the benzylic position, hydroxylation at either the aromatic ring of Tyr or beta-position of Ile, and oxidative cyclization. UstQ may catalyze the oxidation of a phenol moiety, whereas the ustYa and ustYb are most likely responsible for the remaining two-step oxidations. N-desmethylustiloxin F is then methylated by ustM to yield ustiloxin F which in turn substrate of the cytochrome P450 monooxygenase ustC which catalyzes the formation of S-deoxyustiloxin H. The flavoprotein monooxygenases ustF1 and ustF2 then participate in the modification of the side chain of S-deoxyustiloxin H, leading to the synthesis of an oxime intermediate, via ustiloxin H. Finally, carboxylative dehydration performed by the cysteine desulfurase-like protein ustD yields ustiloxin B. This chain is Oxidase ustYb, found in Aspergillus flavus (strain ATCC 200026 / FGSC A1120 / IAM 13836 / NRRL 3357 / JCM 12722 / SRRC 167).